Consider the following 455-residue polypeptide: ATP-dependent protease ATPase subunit HslU (455 aa).

Residues Val-23, 65–70 (GVGKTE), Asp-266, Glu-333, and Arg-405 contribute to the ATP site.

Belongs to the ClpX chaperone family. HslU subfamily. In terms of assembly, a double ring-shaped homohexamer of HslV is capped on each side by a ring-shaped HslU homohexamer. The assembly of the HslU/HslV complex is dependent on binding of ATP.

Its subcellular location is the cytoplasm. In terms of biological role, ATPase subunit of a proteasome-like degradation complex; this subunit has chaperone activity. The binding of ATP and its subsequent hydrolysis by HslU are essential for unfolding of protein substrates subsequently hydrolyzed by HslV. HslU recognizes the N-terminal part of its protein substrates and unfolds these before they are guided to HslV for hydrolysis. The sequence is that of ATP-dependent protease ATPase subunit HslU from Xanthomonas axonopodis pv. citri (strain 306).